A 130-amino-acid polypeptide reads, in one-letter code: MSGGKGKAGSSEKASTSRSAKAGLTFPVGRVHRLLRKGNYAQRIGSGAPVYLTSVLEYLAAEILELAGNAARDNKKSRIIPRHLQLAIRNDEELNKLLGHVTIAQGGVLPNIHQSLLPAKKAKTGASQEL.

The disordered stretch occupies residues 1–22; sequence MSGGKGKAGSSEKASTSRSAKA. Position 2 is an N-acetylserine (Ser-2). Residues Lys-5 and Lys-7 each carry the N6-acetyllysine modification. Gln-105 carries the N5-methylglutamine modification. Ser-127 carries the post-translational modification Phosphoserine. Residues 127–128 carry the [ST]-Q motif motif; that stretch reads SQ.

Belongs to the histone H2A family. In terms of assembly, the nucleosome is a histone octamer containing two molecules each of H2A, H2B, H3 and H4 assembled in one H3-H4 heterotetramer and two H2A-H2B heterodimers. The octamer wraps approximately 147 bp of DNA. Post-translationally, phosphorylated to form H2AS128ph (gamma-H2A) in response to DNA double-strand breaks (DSBs) generated by exogenous genotoxic agents and by stalled replication forks. Phosphorylation is dependent on the DNA damage checkpoint kinases MEC1/ATR and TEL1/ATM, spreads on either side of a detected DSB site and may mark the surrounding chromatin for recruitment of proteins required for DNA damage signaling and repair. Gamma-H2A is removed from the DNA prior to the strand invasion-primer extension step of the repair process and subsequently dephosphorylated. Dephosphorylation is necessary for efficient recovery from the DNA damage checkpoint. In terms of processing, acetylated by ESA1 to form H2AK4ac and H2AK7ac.

It is found in the nucleus. The protein localises to the chromosome. Functionally, core component of nucleosome which plays a central role in DNA double strand break (DSB) repair. Nucleosomes wrap and compact DNA into chromatin, limiting DNA accessibility to the cellular machineries which require DNA as a template. Histones thereby play a central role in transcription regulation, DNA repair, DNA replication and chromosomal stability. DNA accessibility is regulated via a complex set of post-translational modifications of histones, also called histone code, and nucleosome remodeling. This is Histone H2A.1 (HTA1) from Lodderomyces elongisporus (strain ATCC 11503 / CBS 2605 / JCM 1781 / NBRC 1676 / NRRL YB-4239) (Yeast).